Reading from the N-terminus, the 288-residue chain is Ribosomal RNA small subunit methyltransferase A (288 aa).

S-adenosyl-L-methionine contacts are provided by Asn18, Leu20, Gly45, Glu66, Asp91, and Asn118.

It belongs to the class I-like SAM-binding methyltransferase superfamily. rRNA adenine N(6)-methyltransferase family. RsmA subfamily.

It is found in the cytoplasm. It carries out the reaction adenosine(1518)/adenosine(1519) in 16S rRNA + 4 S-adenosyl-L-methionine = N(6)-dimethyladenosine(1518)/N(6)-dimethyladenosine(1519) in 16S rRNA + 4 S-adenosyl-L-homocysteine + 4 H(+). Specifically dimethylates two adjacent adenosines (A1518 and A1519) in the loop of a conserved hairpin near the 3'-end of 16S rRNA in the 30S particle. May play a critical role in biogenesis of 30S subunits. The sequence is that of Ribosomal RNA small subunit methyltransferase A from Mannheimia succiniciproducens (strain KCTC 0769BP / MBEL55E).